Consider the following 300-residue polypeptide: 4-hydroxy-tetrahydrodipicolinate synthase (300 aa).

Position 45 (T45) interacts with pyruvate. Catalysis depends on Y140, which acts as the Proton donor/acceptor. K169 serves as the catalytic Schiff-base intermediate with substrate. Residue I210 coordinates pyruvate.

The protein belongs to the DapA family. Homotetramer; dimer of dimers.

It is found in the cytoplasm. It carries out the reaction L-aspartate 4-semialdehyde + pyruvate = (2S,4S)-4-hydroxy-2,3,4,5-tetrahydrodipicolinate + H2O + H(+). It participates in amino-acid biosynthesis; L-lysine biosynthesis via DAP pathway; (S)-tetrahydrodipicolinate from L-aspartate: step 3/4. Its function is as follows. Catalyzes the condensation of (S)-aspartate-beta-semialdehyde [(S)-ASA] and pyruvate to 4-hydroxy-tetrahydrodipicolinate (HTPA). The sequence is that of 4-hydroxy-tetrahydrodipicolinate synthase from Helicobacter pylori (strain J99 / ATCC 700824) (Campylobacter pylori J99).